An 822-amino-acid polypeptide reads, in one-letter code: DNA gyrase subunit A (822 aa).

The Topo IIA-type catalytic domain maps to 32–497 (LPDVRDGLKP…QVLSLEDEDL (466 aa)). Y120 (O-(5'-phospho-DNA)-tyrosine intermediate) is an active-site residue. The short motif at 524 to 530 (QKRGGRG) is the GyrA-box element.

The protein belongs to the type II topoisomerase GyrA/ParC subunit family. Heterotetramer, composed of two GyrA and two GyrB chains. In the heterotetramer, GyrA contains the active site tyrosine that forms a transient covalent intermediate with DNA, while GyrB binds cofactors and catalyzes ATP hydrolysis.

It is found in the cytoplasm. It catalyses the reaction ATP-dependent breakage, passage and rejoining of double-stranded DNA.. In terms of biological role, a type II topoisomerase that negatively supercoils closed circular double-stranded (ds) DNA in an ATP-dependent manner to modulate DNA topology and maintain chromosomes in an underwound state. Negative supercoiling favors strand separation, and DNA replication, transcription, recombination and repair, all of which involve strand separation. Also able to catalyze the interconversion of other topological isomers of dsDNA rings, including catenanes and knotted rings. Type II topoisomerases break and join 2 DNA strands simultaneously in an ATP-dependent manner. In Streptococcus pneumoniae (strain ATCC BAA-255 / R6), this protein is DNA gyrase subunit A.